The following is a 136-amino-acid chain: Calmodulin-A (136 aa).

EF-hand domains lie at 1–36, 37–72, 74–109, and 110–136; these read EQIA…LGQN, PTEA…KMKD, DSEE…LGEK, and LTDE…EEFV. Ca(2+) is bound by residues Asp14, Asp16, Asp18, Thr20, Glu25, Asp50, Asp52, Asn54, Thr56, Glu61, Asp87, Asp89, Asn91, Tyr93, and Glu98. Position 109 is an N6,N6,N6-trimethyllysine (Lys109). Positions 123, 125, 127, 129, and 134 each coordinate Ca(2+).

Belongs to the calmodulin family.

Its function is as follows. Calmodulin acts as part of a calcium signal transduction pathway by mediating the control of a large number of enzymes, ion channels, aquaporins and other proteins through calcium-binding. Calcium-binding is required for the activation of calmodulin. Among the enzymes to be stimulated by the calmodulin-calcium complex are a number of protein kinases, such as myosin light-chain kinases and calmodulin-dependent protein kinase type II (CaMK2), and phosphatases. This chain is Calmodulin-A (calm1), found in Oryzias latipes (Japanese rice fish).